We begin with the raw amino-acid sequence, 2511 residues long: Fatty acid synthase (2511 aa).

Methionine 1 carries the post-translational modification N-acetylmethionine. The Ketosynthase family 3 (KS3) domain maps to 1-406 (MEEVVIAGMS…GSNVHIILRP (406 aa)). Serine 63 bears the Phosphoserine mark. Lysine 70 is modified (N6-acetyllysine). Residue cysteine 161 is the For beta-ketoacyl synthase activity of the active site. Residue serine 207 is modified to Phosphoserine. Histidine 293 serves as the catalytic For beta-ketoacyl synthase activity. Lysine 298 bears the N6-acetyllysine mark. Residue histidine 331 is the For beta-ketoacyl synthase activity of the active site. The acyl and malonyl transferases stretch occupies residues 429–817 (RTPEAVQKLL…IDANPNALFP (389 aa)). N6-acetyllysine is present on residues lysine 436 and lysine 528. Serine 581 (for malonyltransferase activity) is an active-site residue. Residues 647-648 (DT) and phenylalanine 671 contribute to the an acyl-CoA site. Lysine 673 bears the N6-acetyllysine mark. Serine 725 is subject to Phosphoserine. Arginine 773 provides a ligand contact to an acyl-CoA. Residues 838-966 (HSLAWDVPAA…KVYQWDDPDP (129 aa)) form an N-terminal hotdog fold region. The region spanning 838–1108 (HSLAWDVPAA…TESAPRRQQE (271 aa)) is the PKS/mFAS DH domain. Residue histidine 878 is the Proton acceptor; for dehydratase activity of the active site. The tract at residues 981–1108 (EPLFLAQAEV…TESAPRRQQE (128 aa)) is C-terminal hotdog fold. Lysine 992 carries the post-translational modification N6-acetyllysine. Aspartate 1031 acts as the Proton donor; for dehydratase activity in catalysis. Phosphoserine is present on residues serine 1174 and serine 1411. Cysteine 1471 is modified (S-nitrosocysteine). Residues serine 1584 and serine 1594 each carry the phosphoserine modification. An enoyl reductase region spans residues 1635–1863 (DVPSNWTLEE…VQVLAEEPEA (229 aa)). 1671-1688 (LLIHSGSGGVGQAAIAIA) contributes to the NADP(+) binding site. Lysine 1704 carries the N6-(pyridoxal phosphate)lysine; alternate modification. At lysine 1704 the chain carries N6-acetyllysine; alternate. Lysine 1771 and lysine 1847 each carry N6-acetyllysine. The interval 1864-2118 (VLKGAKPKLM…FVLAEKAAAY (255 aa)) is beta-ketoacyl reductase. 1886 to 1901 (SYIIAGGLGGFGLELA) is a binding site for NADP(+). Lysine 1995 carries the N6-acetyllysine modification. The residue at position 2091 (cysteine 2091) is an S-nitrosocysteine. The 78-residue stretch at 2121–2198 (RDSQRDLVEA…ELSSKADEAS (78 aa)) folds into the Carrier domain. Serine 2156 carries the post-translational modification O-(pantetheine 4'-phosphoryl)serine; alternate. At serine 2156 the chain carries Phosphoserine; alternate. Position 2198 is a phosphoserine (serine 2198). Threonine 2204 and threonine 2215 each carry phosphothreonine. Positions 2207–2511 (EDGLAQQQTQ…AEPRVSVREG (305 aa)) are thioesterase. Serine 2236 bears the Phosphoserine mark. The active-site For thioesterase activity is serine 2308. Lysine 2391 is modified (N6-acetyllysine). Residue lysine 2449 forms a Glycyl lysine isopeptide (Lys-Gly) (interchain with G-Cter in SUMO2) linkage. The active-site For thioesterase activity is histidine 2481.

Homodimer which is arranged in a head to tail fashion. Interacts with CEACAM1; this interaction is insulin and phosphorylation-dependent; reduces fatty-acid synthase activity. Post-translationally, S-nitrosylation of Fatty acid synthase at cysteine residues Cys-1471 or Cys-2091 is important for the enzyme dimerization. In adipocytes, S-nitrosylation of Fatty acid synthase occurs under physiological conditions and gradually increases during adipogenesis. As to expression, ubiquitous. Prominent expression in brain, lung, liver and mammary gland.

It is found in the cytoplasm. The protein resides in the melanosome. The enzyme catalyses acetyl-CoA + n malonyl-CoA + 2n NADPH + 2n H(+) = a long-chain fatty acid + (n+1) CoA + n CO2 + 2n NADP(+).. It catalyses the reaction holo-[ACP] + acetyl-CoA = acetyl-[ACP] + CoA. The catalysed reaction is holo-[ACP] + malonyl-CoA = malonyl-[ACP] + CoA. It carries out the reaction a fatty acyl-[ACP] + malonyl-[ACP] + H(+) = a 3-oxoacyl-[ACP] + holo-[ACP] + CO2. The enzyme catalyses a (3R)-hydroxyacyl-[ACP] + NADP(+) = a 3-oxoacyl-[ACP] + NADPH + H(+). It catalyses the reaction a (3R)-hydroxyacyl-[ACP] = a (2E)-enoyl-[ACP] + H2O. The catalysed reaction is a 2,3-saturated acyl-[ACP] + NADP(+) = a (2E)-enoyl-[ACP] + NADPH + H(+). It carries out the reaction hexadecanoyl-[ACP] + H2O = hexadecanoate + holo-[ACP] + H(+). The enzyme catalyses acetyl-[ACP] + malonyl-[ACP] + H(+) = 3-oxobutanoyl-[ACP] + holo-[ACP] + CO2. It catalyses the reaction 3-oxobutanoyl-[ACP] + NADPH + H(+) = (3R)-hydroxybutanoyl-[ACP] + NADP(+). The catalysed reaction is (3R)-hydroxybutanoyl-[ACP] = (2E)-butenoyl-[ACP] + H2O. It carries out the reaction (2E)-butenoyl-[ACP] + NADPH + H(+) = butanoyl-[ACP] + NADP(+). The enzyme catalyses butanoyl-[ACP] + malonyl-[ACP] + H(+) = 3-oxohexanoyl-[ACP] + holo-[ACP] + CO2. It catalyses the reaction 3-oxohexanoyl-[ACP] + NADPH + H(+) = (3R)-hydroxyhexanoyl-[ACP] + NADP(+). The catalysed reaction is (3R)-hydroxyhexanoyl-[ACP] = (2E)-hexenoyl-[ACP] + H2O. It carries out the reaction (2E)-hexenoyl-[ACP] + NADPH + H(+) = hexanoyl-[ACP] + NADP(+). The enzyme catalyses hexanoyl-[ACP] + malonyl-[ACP] + H(+) = 3-oxooctanoyl-[ACP] + holo-[ACP] + CO2. It catalyses the reaction 3-oxooctanoyl-[ACP] + NADPH + H(+) = (3R)-hydroxyoctanoyl-[ACP] + NADP(+). The catalysed reaction is (3R)-hydroxyoctanoyl-[ACP] = (2E)-octenoyl-[ACP] + H2O. It carries out the reaction (2E)-octenoyl-[ACP] + NADPH + H(+) = octanoyl-[ACP] + NADP(+). The enzyme catalyses octanoyl-[ACP] + malonyl-[ACP] + H(+) = 3-oxodecanoyl-[ACP] + holo-[ACP] + CO2. It catalyses the reaction 3-oxodecanoyl-[ACP] + NADPH + H(+) = (3R)-hydroxydecanoyl-[ACP] + NADP(+). The catalysed reaction is (3R)-hydroxydecanoyl-[ACP] = (2E)-decenoyl-[ACP] + H2O. It carries out the reaction (2E)-decenoyl-[ACP] + NADPH + H(+) = decanoyl-[ACP] + NADP(+). The enzyme catalyses decanoyl-[ACP] + malonyl-[ACP] + H(+) = 3-oxododecanoyl-[ACP] + holo-[ACP] + CO2. It catalyses the reaction 3-oxododecanoyl-[ACP] + NADPH + H(+) = (3R)-hydroxydodecanoyl-[ACP] + NADP(+). The catalysed reaction is (3R)-hydroxydodecanoyl-[ACP] = (2E)-dodecenoyl-[ACP] + H2O. It carries out the reaction (2E)-dodecenoyl-[ACP] + NADPH + H(+) = dodecanoyl-[ACP] + NADP(+). The enzyme catalyses dodecanoyl-[ACP] + malonyl-[ACP] + H(+) = 3-oxotetradecanoyl-[ACP] + holo-[ACP] + CO2. It catalyses the reaction 3-oxotetradecanoyl-[ACP] + NADPH + H(+) = (3R)-hydroxytetradecanoyl-[ACP] + NADP(+). The catalysed reaction is (3R)-hydroxytetradecanoyl-[ACP] = (2E)-tetradecenoyl-[ACP] + H2O. It carries out the reaction (2E)-tetradecenoyl-[ACP] + NADPH + H(+) = tetradecanoyl-[ACP] + NADP(+). The enzyme catalyses tetradecanoyl-[ACP] + malonyl-[ACP] + H(+) = 3-oxohexadecanoyl-[ACP] + holo-[ACP] + CO2. It catalyses the reaction 3-oxohexadecanoyl-[ACP] + NADPH + H(+) = (3R)-hydroxyhexadecanoyl-[ACP] + NADP(+). The catalysed reaction is (3R)-hydroxyhexadecanoyl-[ACP] = (2E)-hexadecenoyl-[ACP] + H2O. It carries out the reaction (2E)-hexadecenoyl-[ACP] + NADPH + H(+) = hexadecanoyl-[ACP] + NADP(+). The enzyme catalyses hexadecanoyl-[ACP] + malonyl-[ACP] + H(+) = 3-oxooctadecanoyl-[ACP] + holo-[ACP] + CO2. It catalyses the reaction 3-oxooctadecanoyl-[ACP] + NADPH + H(+) = (3R)-hydroxyoctadecanoyl-[ACP] + NADP(+). The catalysed reaction is (3R)-hydroxyoctadecanoyl-[ACP] = (2E)-octadecenoyl-[ACP] + H2O. It carries out the reaction (2E)-octadecenoyl-[ACP] + NADPH + H(+) = octadecanoyl-[ACP] + NADP(+). The enzyme catalyses tetradecanoyl-[ACP] + H2O = tetradecanoate + holo-[ACP] + H(+). It catalyses the reaction octadecanoyl-[ACP] + H2O = octadecanoate + holo-[ACP] + H(+). It functions in the pathway lipid metabolism; fatty acid biosynthesis. Activated by S-nitrosylation which promotes enzyme dimerization. Cerulenin, a potent non-competitive pharmacological inhibitor of FAS, binds covalently to the active site of the condensing enzyme region, inactivating a key enzyme step in fatty acid synthesis. Fatty acid synthetase is a multifunctional enzyme that catalyzes the de novo biosynthesis of long-chain saturated fatty acids starting from acetyl-CoA and malonyl-CoA in the presence of NADPH. This multifunctional protein contains 7 catalytic activities and a site for the binding of the prosthetic group 4'-phosphopantetheine of the acyl carrier protein ([ACP]) domain. In terms of biological role, (Microbial infection) Fatty acid synthetase activity is required for SARS coronavirus-2/SARS-CoV-2 replication. The protein is Fatty acid synthase (FASN) of Homo sapiens (Human).